A 222-amino-acid chain; its full sequence is Ribose-5-phosphate isomerase A (222 aa).

Substrate is bound by residues 29–32 (TGST), 82–85 (DSAD), and 95–98 (KGGG). Residue Glu104 is the Proton acceptor of the active site. A substrate-binding site is contributed by Lys122.

This sequence belongs to the ribose 5-phosphate isomerase family. In terms of assembly, homodimer.

The catalysed reaction is aldehydo-D-ribose 5-phosphate = D-ribulose 5-phosphate. It functions in the pathway carbohydrate degradation; pentose phosphate pathway; D-ribose 5-phosphate from D-ribulose 5-phosphate (non-oxidative stage): step 1/1. In terms of biological role, catalyzes the reversible conversion of ribose-5-phosphate to ribulose 5-phosphate. The polypeptide is Ribose-5-phosphate isomerase A (Blochmanniella floridana).